The chain runs to 156 residues: SsrA-binding protein (156 aa).

It belongs to the SmpB family.

It localises to the cytoplasm. In terms of biological role, required for rescue of stalled ribosomes mediated by trans-translation. Binds to transfer-messenger RNA (tmRNA), required for stable association of tmRNA with ribosomes. tmRNA and SmpB together mimic tRNA shape, replacing the anticodon stem-loop with SmpB. tmRNA is encoded by the ssrA gene; the 2 termini fold to resemble tRNA(Ala) and it encodes a 'tag peptide', a short internal open reading frame. During trans-translation Ala-aminoacylated tmRNA acts like a tRNA, entering the A-site of stalled ribosomes, displacing the stalled mRNA. The ribosome then switches to translate the ORF on the tmRNA; the nascent peptide is terminated with the 'tag peptide' encoded by the tmRNA and targeted for degradation. The ribosome is freed to recommence translation, which seems to be the essential function of trans-translation. This Lactiplantibacillus plantarum (strain ATCC BAA-793 / NCIMB 8826 / WCFS1) (Lactobacillus plantarum) protein is SsrA-binding protein.